We begin with the raw amino-acid sequence, 412 residues long: Gamma-glutamyl phosphate reductase (412 aa).

The protein belongs to the gamma-glutamyl phosphate reductase family.

It localises to the cytoplasm. The enzyme catalyses L-glutamate 5-semialdehyde + phosphate + NADP(+) = L-glutamyl 5-phosphate + NADPH + H(+). The protein operates within amino-acid biosynthesis; L-proline biosynthesis; L-glutamate 5-semialdehyde from L-glutamate: step 2/2. Catalyzes the NADPH-dependent reduction of L-glutamate 5-phosphate into L-glutamate 5-semialdehyde and phosphate. The product spontaneously undergoes cyclization to form 1-pyrroline-5-carboxylate. The polypeptide is Gamma-glutamyl phosphate reductase (Lactiplantibacillus plantarum (strain ATCC BAA-793 / NCIMB 8826 / WCFS1) (Lactobacillus plantarum)).